Consider the following 146-residue polypeptide: Transcriptional regulator MraZ (146 aa).

SpoVT-AbrB domains follow at residues 4–46 and 75–118; these read TVFR…SQTE and TVKV…PEQR.

The protein belongs to the MraZ family. In terms of assembly, forms oligomers.

The protein localises to the cytoplasm. The protein resides in the nucleoid. The chain is Transcriptional regulator MraZ from Mesomycoplasma hyopneumoniae (strain 232) (Mycoplasma hyopneumoniae).